Here is a 74-residue protein sequence, read N- to C-terminus: Sec-independent protein translocase protein TatA (74 aa).

The chain crosses the membrane as a helical span at residues methionine 1–glycine 21.

It belongs to the TatA/E family. Forms a complex with TatC.

Its subcellular location is the cell inner membrane. Part of the twin-arginine translocation (Tat) system that transports large folded proteins containing a characteristic twin-arginine motif in their signal peptide across membranes. TatA could form the protein-conducting channel of the Tat system. The protein is Sec-independent protein translocase protein TatA of Sulfurihydrogenibium sp. (strain YO3AOP1).